Consider the following 769-residue polypeptide: Signal transducer and activator of transcription 3.1 (769 aa).

Positions 150–162 (DVRKKVQDLEQKM) match the Essential for nuclear import motif. In terms of domain architecture, SH2 spans 580 to 670 (WNEGYIMGFI…DATNILVSPL (91 aa)). Phosphoserine; by NLK is present on Ser728.

It belongs to the transcription factor STAT family. Forms a homodimer or a heterodimer with a related family member, such as stat1. Interacts with nlk.2. Post-translationally, phosphorylation of both tyrosine and serine residues, together with dimerization, is required for mesoderm induction.

The protein resides in the cytoplasm. Its subcellular location is the nucleus. Functionally, transcription factor that binds to target promoter sequences and activates transcription upon il6st/gp130 stimulation. Mediates ventralization of embryos, at least in part via inhibition of smad2 signaling. Required for hairy2 to induce dll1/delta1 and promote neural crest cell proliferation and differentiation. Involved in TGFbeta-mediated mesoderm induction in early embryos, acting downstream of map3k7/tak1 and nlk.2. The sequence is that of Signal transducer and activator of transcription 3.1 (stat3.1) from Xenopus laevis (African clawed frog).